A 110-amino-acid chain; its full sequence is U9-agatoxin-Ao1a (110 aa).

An N-terminal signal peptide occupies residues 1 to 17; that stretch reads MKLLLAIAGLFLVQTLA. Residues 18-38 constitute a propeptide that is removed on maturation; sequence EDVRAHEESSFLAAVAPEEQR. 5 cysteine pairs are disulfide-bonded: cysteine 40–cysteine 54, cysteine 47–cysteine 60, cysteine 51–cysteine 87, cysteine 53–cysteine 72, and cysteine 62–cysteine 70.

Belongs to the neurotoxin 37 family. Expressed by the venom gland.

It is found in the secreted. This Agelena orientalis (Funnel-web spider) protein is U9-agatoxin-Ao1a.